Here is a 160-residue protein sequence, read N- to C-terminus: Cyclic pyranopterin monophosphate synthase (160 aa).

Residues 75-77 (LCH) and 113-114 (ME) contribute to the substrate site. The active site involves D128.

It belongs to the MoaC family. As to quaternary structure, homohexamer; trimer of dimers.

The enzyme catalyses (8S)-3',8-cyclo-7,8-dihydroguanosine 5'-triphosphate = cyclic pyranopterin phosphate + diphosphate. The protein operates within cofactor biosynthesis; molybdopterin biosynthesis. Functionally, catalyzes the conversion of (8S)-3',8-cyclo-7,8-dihydroguanosine 5'-triphosphate to cyclic pyranopterin monophosphate (cPMP). This is Cyclic pyranopterin monophosphate synthase from Ruthia magnifica subsp. Calyptogena magnifica.